A 488-amino-acid polypeptide reads, in one-letter code: Ribosomal RNA small subunit methyltransferase F (488 aa).

S-adenosyl-L-methionine contacts are provided by residues Ala-135–Lys-141, Glu-159, Asp-186, and Asp-204. Residue Cys-257 is the Nucleophile of the active site.

The protein belongs to the class I-like SAM-binding methyltransferase superfamily. RsmB/NOP family.

The protein resides in the cytoplasm. The catalysed reaction is cytidine(1407) in 16S rRNA + S-adenosyl-L-methionine = 5-methylcytidine(1407) in 16S rRNA + S-adenosyl-L-homocysteine + H(+). Specifically methylates the cytosine at position 1407 (m5C1407) of 16S rRNA. In Shewanella pealeana (strain ATCC 700345 / ANG-SQ1), this protein is Ribosomal RNA small subunit methyltransferase F.